The primary structure comprises 187 residues: GTP cyclohydrolase 1 (187 aa).

Zn(2+)-binding residues include Cys-76, His-79, and Cys-148.

This sequence belongs to the GTP cyclohydrolase I family. As to quaternary structure, toroid-shaped homodecamer, composed of two pentamers of five dimers.

The catalysed reaction is GTP + H2O = 7,8-dihydroneopterin 3'-triphosphate + formate + H(+). It functions in the pathway cofactor biosynthesis; 7,8-dihydroneopterin triphosphate biosynthesis; 7,8-dihydroneopterin triphosphate from GTP: step 1/1. The protein is GTP cyclohydrolase 1 of Streptococcus agalactiae serotype Ia (strain ATCC 27591 / A909 / CDC SS700).